The sequence spans 231 residues: Orotidine 5'-phosphate decarboxylase (231 aa).

Residues Asp11, Lys33, 60–69, Thr120, Arg181, Gln190, Gly210, and Arg211 contribute to the substrate site; that span reads DLKFHDIPNT. The Proton donor role is filled by Lys62.

It belongs to the OMP decarboxylase family. Type 1 subfamily. As to quaternary structure, homodimer.

The enzyme catalyses orotidine 5'-phosphate + H(+) = UMP + CO2. Its pathway is pyrimidine metabolism; UMP biosynthesis via de novo pathway; UMP from orotate: step 2/2. Functionally, catalyzes the decarboxylation of orotidine 5'-monophosphate (OMP) to uridine 5'-monophosphate (UMP). The polypeptide is Orotidine 5'-phosphate decarboxylase (Pseudoalteromonas atlantica (strain T6c / ATCC BAA-1087)).